The following is a 961-amino-acid chain: Zinc finger protein basonuclin-1 (961 aa).

A hydrophobic region spans residues 210–219 (MTFMLPFQFF). 2 consecutive C2H2-type zinc fingers follow at residues 325–348 (VFCT…NAVH) and 353–382 (HKCT…PRLH). The segment at 370–393 (RNRHSANPNPRLHMPMNRNNRDKD) is disordered. The Nuclear localization signal motif lies at 501 to 507 (PKKKSRK). Phosphoserine is present on residues Ser505 and Ser509. Residues 523–572 (EEKRHSLSSDDEVPLQVVSEDEPEDSSPRSDRVPEEQHTQLSLEEPLPQG) are disordered. The span at 531–547 (SDDEVPLQVVSEDEPED) shows a compositional bias: acidic residues. Over residues 548–560 (SSPRSDRVPEEQH) the composition is skewed to basic and acidic residues. C2H2-type zinc fingers lie at residues 687–711 (FQCD…NTHA) and 715–743 (HACT…SLHQ). Positions 810–864 (ESYNSGPPSEGTILDLSTTSSMKSESSSHSSWDSDGVSEEGTALMEDSDGNCEGQ) are disordered. Positions 826 to 844 (STTSSMKSESSSHSSWDSD) are enriched in low complexity. C2H2-type zinc fingers lie at residues 895-918 (ITCH…KTVH) and 923-950 (HKCK…PNLH). Residues 937 to 961 (VRSRNRHSQNPNLHKSLASSPSHLQ) are disordered.

In terms of assembly, interacts with HSF2BP (via C-terminus). Post-translationally, phosphorylation on Ser-505 and Ser-509 leads to cytoplasmic localization. Epidermis and germ cells of testis and ovary.

It localises to the nucleus. It is found in the cytoplasm. Its subcellular location is the nucleoplasm. Transcriptional activator. It is likely involved in the regulation of keratinocytes terminal differentiation in squamous epithelia and hair follicles. Required for the maintenance of spermatogenesis. It is involved in the positive regulation of oocyte maturation, probably acting through the control of BMP15 levels and regulation of AKT signaling cascade. May also play a role in the early development of embryos. This Mus musculus (Mouse) protein is Zinc finger protein basonuclin-1 (Bnc1).